A 435-amino-acid polypeptide reads, in one-letter code: MNTVHAKGNVLNKIGIPSHMVWGYIGVVIFMVGDGLEQGWLSPFLVDHGLSMQQSASLFTMYGIAVTISAWLSGTFVQTWGPRKTMTVGLLAFILGSAAFIGWAIPHMYYPALLGSYALRGLGYPLFAYSFLVWVSYSTSQNILGKAVGWFWFMFTCGLNVLGPFYSSYAVPAFGEINTLWSALLFVAAGGILALFFNKDKFTPIQKQDQPKWKELSKAFTIMFENPKVGIGGVVKTINAIGQFGFAIFLPTYLARYGYSVSEWLQIWGTLFFVNIVFNIIFGAVGDKLGWRNTVMWFGGVGCGIFTLALYYTPQLIGHQYWVLMIIACCYGAALAGYVPLSALLPTLAPDNKGAAMSVLNLGSGLCAFIAPGIVSLFIGPLGAGGVIWIFAALYFFSAFLTRFLTISEQSTDVYTEERFVRENVQTNFDKTVKQ.

Topologically, residues 1–13 (MNTVHAKGNVLNK) are cytoplasmic. The chain crosses the membrane as a helical span at residues 14-34 (IGIPSHMVWGYIGVVIFMVGD). The Extracellular segment spans residues 35–56 (GLEQGWLSPFLVDHGLSMQQSA). The helical transmembrane segment at 57–77 (SLFTMYGIAVTISAWLSGTFV) threads the bilayer. The Cytoplasmic segment spans residues 78–85 (QTWGPRKT). The helical transmembrane segment at 86-106 (MTVGLLAFILGSAAFIGWAIP) threads the bilayer. Topologically, residues 107 to 112 (HMYYPA) are extracellular. Residues 113–133 (LLGSYALRGLGYPLFAYSFLV) form a helical membrane-spanning segment. At 134–142 (WVSYSTSQN) the chain is on the cytoplasmic side. Residues 143-163 (ILGKAVGWFWFMFTCGLNVLG) form a helical membrane-spanning segment. Over 164-176 (PFYSSYAVPAFGE) the chain is Extracellular. Residues 177–197 (INTLWSALLFVAAGGILALFF) traverse the membrane as a helical segment. The Cytoplasmic portion of the chain corresponds to 198 to 228 (NKDKFTPIQKQDQPKWKELSKAFTIMFENPK). A helical membrane pass occupies residues 229–249 (VGIGGVVKTINAIGQFGFAIF). Residues 250-264 (LPTYLARYGYSVSEW) lie on the Extracellular side of the membrane. A helical membrane pass occupies residues 265-285 (LQIWGTLFFVNIVFNIIFGAV). Topologically, residues 286 to 293 (GDKLGWRN) are cytoplasmic. The helical transmembrane segment at 294 to 314 (TVMWFGGVGCGIFTLALYYTP) threads the bilayer. At 315-320 (QLIGHQ) the chain is on the extracellular side. The helical transmembrane segment at 321 to 341 (YWVLMIIACCYGAALAGYVPL) threads the bilayer. Residues 342-354 (SALLPTLAPDNKG) are Cytoplasmic-facing. The chain crosses the membrane as a helical span at residues 355 to 375 (AAMSVLNLGSGLCAFIAPGIV). A topological domain (extracellular) is located at residue Ser-376. The helical transmembrane segment at 377 to 397 (LFIGPLGAGGVIWIFAALYFF) threads the bilayer. Residues 398–435 (SAFLTRFLTISEQSTDVYTEERFVRENVQTNFDKTVKQ) are Cytoplasmic-facing.

This sequence belongs to the major facilitator superfamily. Sugar transporter (TC 2.A.1.1) family. CsbX subfamily.

Its subcellular location is the cell membrane. This chain is Alpha-ketoglutarate permease (csbX), found in Bacillus subtilis (strain 168).